Reading from the N-terminus, the 69-residue chain is Large ribosomal subunit protein bL31 (69 aa).

Residues C16, C18, C37, and C40 each contribute to the Zn(2+) site.

This sequence belongs to the bacterial ribosomal protein bL31 family. Type A subfamily. Part of the 50S ribosomal subunit. Zn(2+) is required as a cofactor.

Functionally, binds the 23S rRNA. The sequence is that of Large ribosomal subunit protein bL31 from Buchnera aphidicola subsp. Cinara cedri (strain Cc).